The sequence spans 507 residues: Rhamnogalacturonase A (507 aa).

The N-terminal stretch at 1-21 (MYVSRLLLFLAPLLVKGQLSG) is a signal peptide. An intrachain disulfide couples cysteine 38 to cysteine 64. Aspartate 215 (proton donor) is an active-site residue. Residues cysteine 217 and cysteine 234 are joined by a disulfide bond. Asparagine 235 carries an N-linked (GlcNAc...) asparagine glycan. Histidine 290 is a catalytic residue. Asparagine 317 carries an N-linked (GlcNAc...) asparagine glycan. 2 cysteine pairs are disulfide-bonded: cysteine 340/cysteine 346 and cysteine 368/cysteine 377. Residues 462–491 (SPATSSPTATSTAISSVDPVSAATTTATSH) show a composition bias toward low complexity. The tract at residues 462-507 (SPATSSPTATSTAISSVDPVSAATTTATSHGHGKSHHKHQCRAHRH) is disordered. Over residues 492–507 (GHGKSHHKHQCRAHRH) the composition is skewed to basic residues.

The protein belongs to the glycosyl hydrolase 28 family.

It localises to the secreted. The enzyme catalyses Endohydrolysis of alpha-D-GalA-(1-&gt;2)-alpha-L-Rha glycosidic bond in the rhamnogalacturonan I backbone with initial inversion of anomeric configuration releasing oligosaccharides with beta-D-GalA at the reducing end.. In terms of biological role, pectinolytic enzymes consist of four classes of enzymes: pectine lyase, polygalacturonase, pectin methylesterase and rhamnogalacturonase. Hydrolyzes alpha-D-galacturonopyranosyl-(1,2)-alpha-L-rhamnopyranosyl linkages in the backbone of the hairy regions of pectins. Active against linseed rhamnogalacturonan. The sequence is that of Rhamnogalacturonase A (rhgA) from Emericella nidulans (strain FGSC A4 / ATCC 38163 / CBS 112.46 / NRRL 194 / M139) (Aspergillus nidulans).